A 201-amino-acid polypeptide reads, in one-letter code: Small ribosomal subunit protein uS4 (201 aa).

The region spanning 92–155 is the S4 RNA-binding domain; that stretch reads ARLDNVVFRL…KSLEVIANSL (64 aa).

It belongs to the universal ribosomal protein uS4 family. In terms of assembly, part of the 30S ribosomal subunit. Contacts protein S5. The interaction surface between S4 and S5 is involved in control of translational fidelity.

One of the primary rRNA binding proteins, it binds directly to 16S rRNA where it nucleates assembly of the body of the 30S subunit. Functionally, with S5 and S12 plays an important role in translational accuracy. The polypeptide is Small ribosomal subunit protein uS4 (Phocaeicola vulgatus (strain ATCC 8482 / DSM 1447 / JCM 5826 / CCUG 4940 / NBRC 14291 / NCTC 11154) (Bacteroides vulgatus)).